Consider the following 557-residue polypeptide: uncharacterized protein (557 aa).

In terms of domain architecture, DhaL spans serine 7–serine 206.

This is an uncharacterized protein from Mycoplasma genitalium (strain ATCC 33530 / DSM 19775 / NCTC 10195 / G37) (Mycoplasmoides genitalium).